A 359-amino-acid polypeptide reads, in one-letter code: 5-amino-6-(D-ribitylamino)uracil--L-tyrosine 4-hydroxyphenyl transferase 1 (359 aa).

The region spanning 45-282 (VTYVVNANIN…VYAISRIFFK (238 aa)) is the Radical SAM core domain. [4Fe-4S] cluster is bound by residues C59, C63, and C66.

The protein belongs to the radical SAM superfamily. CofH family. As to quaternary structure, consists of two subunits, CofG and CofH. Requires [4Fe-4S] cluster as cofactor.

The catalysed reaction is 5-amino-6-(D-ribitylamino)uracil + L-tyrosine + S-adenosyl-L-methionine = 5-amino-5-(4-hydroxybenzyl)-6-(D-ribitylimino)-5,6-dihydrouracil + 2-iminoacetate + 5'-deoxyadenosine + L-methionine + H(+). It functions in the pathway cofactor biosynthesis; coenzyme F0 biosynthesis. Its function is as follows. Catalyzes the radical-mediated synthesis of 5-amino-5-(4-hydroxybenzyl)-6-(D-ribitylimino)-5,6-dihydrouracil from 5-amino-6-(D-ribitylamino)uracil and L-tyrosine. The sequence is that of 5-amino-6-(D-ribitylamino)uracil--L-tyrosine 4-hydroxyphenyl transferase 1 from Methanococcus maripaludis (strain DSM 14266 / JCM 13030 / NBRC 101832 / S2 / LL).